Here is a 150-residue protein sequence, read N- to C-terminus: uncharacterized protein (150 aa).

The HTH asnC-type domain maps to 5-66; sequence LDKVDRRLLE…KPNYKKLNLG (62 aa). The H-T-H motif DNA-binding region spans 24–43; it reads IATLSKKLGIPRTTVHYRIK.

This is an uncharacterized protein from Pyrococcus horikoshii (strain ATCC 700860 / DSM 12428 / JCM 9974 / NBRC 100139 / OT-3).